The primary structure comprises 840 residues: Transient receptor potential cation channel subfamily V member 1 (840 aa).

The span at 1–12 (MKNWGSSDSGGS) shows a compositional bias: low complexity. The interval 1–43 (MKNWGSSDSGGSEDPPQEDSCLDPLDGDPNSRPVPAKPHIFPT) is disordered. Residues 1-433 (MKNWGSSDSG…QDKWDRFVKR (433 aa)) are Cytoplasmic-facing. ANK repeat units follow at residues 111-139 (KLYD…FLQK) and 154-186 (TGKT…QTDS). ATP is bound by residues Arg-116, Lys-156, Lys-161, Asn-165, 200–203 (YKGQ), and 211–212 (ER). ANK repeat units follow at residues 204-229 (TALH…ADVQ), 250-277 (ELPL…QPAD), 286-322 (NTVL…KLHP), and 336-359 (TPLA…REIQ). Thr-371 is subject to Phosphothreonine; by PKA; in vitro. One copy of the ANK 7 repeat lies at 394–416 (NSVLEVIAYSSSETPNRHDMLLV). Residues 434-455 (IFYFNFFIYCLYMIIFTTAAYY) form a helical membrane-spanning segment. Residues 456–473 (RPVDGLPPYKLKHTVGDY) are Extracellular-facing. Residues 474–498 (FRVTGEILSVLGGVYFFFRGIQYFL) form a helical membrane-spanning segment. The Cytoplasmic portion of the chain corresponds to 499–511 (QRRPSLKTLFVDS). Ser-503 is modified (phosphoserine; by PKC/PRKCE). 512–513 (YS) serves as a coordination point for resiniferatoxin. A helical membrane pass occupies residues 512–533 (YSEMLFFVQSLFMLGTVVLYFC). Residues 534-536 (HHK) lie on the Extracellular side of the membrane. A helical membrane pass occupies residues 537–557 (EYVASMVFSLAMGWTNMLYYT). The resiniferatoxin site is built by Thr-551 and Arg-558. The Cytoplasmic segment spans residues 558-560 (RGF). The helical transmembrane segment at 561-599 (QQMGIYAVMIEKMILRDLCRFMFVYLVFLFGFSTAVVTL) threads the bilayer. The Extracellular segment spans residues 600–631 (IEDGKNNSVPTESTLHRWRGPGCRPPDSSYNS). An N-linked (GlcNAc...) asparagine glycan is attached at Asn-605. Positions 632–653 (LYSTCLELFKFTIGMGDLEFTE) form an intramembrane region, pore-forming. Gly-645 is a binding site for Na(+). The Selectivity filter motif lies at 645-648 (GMGD). Ca(2+) is bound at residue Asp-648. The Extracellular portion of the chain corresponds to 654–657 (NYDF). Residues 658 to 684 (KAVFIILLLAYVILTYILLLNMLIALM) form a helical membrane-spanning segment. At 685–840 (GETVNKIAQE…FKDPVGLGEK (156 aa)) the chain is on the cytoplasmic side. The segment at 686-714 (ETVNKIAQESKNIWKLQRAITILDTEKSF) is AD. Thr-706 is modified (phosphothreonine). The interval 769 to 803 (EGIKRTLSFSLRSGRVSGRNWKNFSLVPLLRDAST) is interaction with calmodulin. Ser-776 is subject to Phosphoserine. A required for PIP2-mediated channel inhibition region spans residues 779-794 (LRSGRVSGRNWKNFSL). The residue at position 802 (Ser-802) is a Phosphoserine; by PKC/PRKCE and PKC/PRKCZ. At Ser-822 the chain carries Phosphoserine.

Belongs to the transient receptor (TC 1.A.4) family. TrpV subfamily. TRPV1 sub-subfamily. In terms of assembly, homotetramer. Interacts with PIRT. May also form a heteromeric channel with TRPV3. Interacts with CALM, PRKCM and CSK. Interacts with PRKCG and NTRK1, probably by forming a trimeric complex. Interacts with the Scolopendra mutilans RhTx toxin. Interacts with TMEM100. Interacts with PACS2. Post-translationally, phosphorylation by PKA reverses capsaicin-induced dephosphorylation at multiple sites. Phosphorylation by CAMKII seems to regulate binding to vanilloids. Phosphorylated and modulated by PRKCE, PRKCM and probably PRKCZ. Dephosphorylation by calcineurin seems to lead to receptor desensitization and phosphorylation by CAMKII recovers activity.

Its subcellular location is the postsynaptic cell membrane. The protein resides in the cell projection. It localises to the dendritic spine membrane. The protein localises to the cell membrane. The enzyme catalyses Ca(2+)(in) = Ca(2+)(out). The catalysed reaction is Mg(2+)(in) = Mg(2+)(out). It carries out the reaction Na(+)(in) = Na(+)(out). It catalyses the reaction K(+)(in) = K(+)(out). Channel activity is activated via the interaction with PIRT and phosphatidylinositol 4,5-bisphosphate (PIP2). Both PIRT and PIP2 are required to activate channel activity. The channel is sensitized by ATP binding. Repeated stimulation with capsaicin gives rise to progressively smaller responses, due to desensitization. This desensitization is triggered by the influx of calcium ions and is inhibited by elevated ATP levels. Ca(2+) and CALM displace ATP from its binding site and trigger a conformation change that leads to a closed, desensitized channel. Intracellular PIP2 inhibits desensitization. The double-knot toxin (DkTx) from the Chinese earth tiger tarantula activates the channel and traps it in an open conformation. The Scolopendra mutilans RhTx toxin potentiates the heat activation pathway mediated by this channel by binding to the charge-rich outer pore region (in an activated state). Its function is as follows. Non-selective calcium permeant cation channel involved in detection of noxious chemical and thermal stimuli. Seems to mediate proton influx and may be involved in intracellular acidosis in nociceptive neurons. Involved in mediation of inflammatory pain and hyperalgesia. Sensitized by a phosphatidylinositol second messenger system activated by receptor tyrosine kinases, which involves PKC isozymes and PCL. Activated by vanilloids, like capsaicin, and temperatures higher than 42 degrees Celsius. Upon activation, exhibits a time- and Ca(2+)-dependent outward rectification, followed by a long-lasting refractory state. Mild extracellular acidic pH (6.5) potentiates channel activation by noxious heat and vanilloids, whereas acidic conditions (pH &lt;6) directly activate the channel. Can be activated by endogenous compounds, including 12-hydroperoxytetraenoic acid and bradykinin. Acts as ionotropic endocannabinoid receptor with central neuromodulatory effects. Triggers a form of long-term depression (TRPV1-LTD) mediated by the endocannabinoid anandamine in the hippocampus and nucleus accumbens by affecting AMPA receptors endocytosis. This is Transient receptor potential cation channel subfamily V member 1 (TRPV1) from Canis lupus familiaris (Dog).